The sequence spans 585 residues: Proline--tRNA ligase (585 aa).

Residue Lys-173 forms an Isoglutamyl lysine isopeptide (Lys-Gln) (interchain with Q-Cter in protein Pup) linkage.

The protein belongs to the class-II aminoacyl-tRNA synthetase family. ProS type 1 subfamily. In terms of assembly, homodimer.

The protein resides in the cytoplasm. The catalysed reaction is tRNA(Pro) + L-proline + ATP = L-prolyl-tRNA(Pro) + AMP + diphosphate. Catalyzes the attachment of proline to tRNA(Pro) in a two-step reaction: proline is first activated by ATP to form Pro-AMP and then transferred to the acceptor end of tRNA(Pro). As ProRS can inadvertently accommodate and process non-cognate amino acids such as alanine and cysteine, to avoid such errors it has two additional distinct editing activities against alanine. One activity is designated as 'pretransfer' editing and involves the tRNA(Pro)-independent hydrolysis of activated Ala-AMP. The other activity is designated 'posttransfer' editing and involves deacylation of mischarged Ala-tRNA(Pro). The misacylated Cys-tRNA(Pro) is not edited by ProRS. This Mycolicibacterium smegmatis (strain ATCC 700084 / mc(2)155) (Mycobacterium smegmatis) protein is Proline--tRNA ligase (proS).